Reading from the N-terminus, the 211-residue chain is MGVRAQQKERTRRSLIEAAFSQLSAERSFASLSLREVSREAGIAPTSFYRHFRDVDELGLTMVDESGLMLRQLMRQARQRIAKGGSVIRTSVSTFMEFIGNNPNAFRLLLRERSGTSAAFRAAVAREIQHFIAELADYLELENHMPRSFTEAQAEAMVTIVFSAGAEVLDVDIEQRRQLEERLVLQLRMISKGAYYWYRREQEKLAASRVE.

Positions 10–70 (RTRRSLIEAA…TMVDESGLML (61 aa)) constitute an HTH tetR-type domain. The segment at residues 33 to 52 (SLREVSREAGIAPTSFYRHF) is a DNA-binding region (H-T-H motif).

In terms of assembly, homodimer.

Its subcellular location is the cytoplasm. Functionally, represses the transcription of fabB, involved in unsaturated fatty acid (UFA) biosynthesis. By controlling UFA production, FabR directly influences the physical properties of the membrane bilayer. The sequence is that of HTH-type transcriptional repressor FabR from Yersinia pseudotuberculosis serotype O:1b (strain IP 31758).